Here is a 445-residue protein sequence, read N- to C-terminus: Trigger factor (445 aa).

A PPIase FKBP-type domain is found at 162-247 (GDQVTIDAIG…IKAVHTAEPT (86 aa)).

It belongs to the FKBP-type PPIase family. Tig subfamily.

It is found in the cytoplasm. It carries out the reaction [protein]-peptidylproline (omega=180) = [protein]-peptidylproline (omega=0). Functionally, involved in protein export. Acts as a chaperone by maintaining the newly synthesized protein in an open conformation. Functions as a peptidyl-prolyl cis-trans isomerase. The protein is Trigger factor of Rickettsia massiliae (strain Mtu5).